We begin with the raw amino-acid sequence, 112 residues long: Cortistatin (112 aa).

The N-terminal stretch at 1-27 (MGGCSTRGKRPSALSLLLLLLLSGIAA) is a signal peptide. Positions 28–81 (SALPLESGPTGQDSVQDATGGRRTGLLTFLAWWHEWASQDSSSTAFEGGTPELS) are excised as a propeptide. The segment at 66-101 (QDSSSTAFEGGTPELSKRQERPPLQQPPHRDKKPCK) is disordered. The cysteines at positions 100 and 111 are disulfide-linked.

The protein belongs to the somatostatin family. In terms of tissue distribution, interneurons in the cerebral cortex and hippocampus.

The protein resides in the secreted. In terms of biological role, neuropeptide with neuronal depressant and sleep-modulating properties. The polypeptide is Cortistatin (Cort) (Rattus norvegicus (Rat)).